Reading from the N-terminus, the 396-residue chain is Elongation factor Tu (396 aa).

The tr-type G domain maps to 10–206 (KPHVNVGTIG…ALDSYIPEPV (197 aa)). Residues 19–26 (GHIDHGKT) are G1. A GTP-binding site is contributed by 19–26 (GHIDHGKT). Residue threonine 26 coordinates Mg(2+). Positions 60 to 64 (TKTVT) are G2. A G3 region spans residues 83-86 (DCPG). Residues 83 to 87 (DCPGH) and 138 to 141 (NKCD) contribute to the GTP site. The segment at 138 to 141 (NKCD) is G4. A G5 region spans residues 176-178 (ASL).

This sequence belongs to the TRAFAC class translation factor GTPase superfamily. Classic translation factor GTPase family. EF-Tu/EF-1A subfamily. As to quaternary structure, monomer.

Its subcellular location is the cytoplasm. The catalysed reaction is GTP + H2O = GDP + phosphate + H(+). Its function is as follows. GTP hydrolase that promotes the GTP-dependent binding of aminoacyl-tRNA to the A-site of ribosomes during protein biosynthesis. In Sorangium cellulosum (strain So ce56) (Polyangium cellulosum (strain So ce56)), this protein is Elongation factor Tu.